The sequence spans 408 residues: Transmembrane protein 237 (408 aa).

Over residues 1–14 the composition is skewed to basic and acidic residues; the sequence is MRTDSGARLEEGHL. The tract at residues 1-137 is disordered; sequence MRTDSGARLE…RRKTKKTQPA (137 aa). Ser25 and Ser49 each carry phosphoserine. A compositionally biased stretch (basic and acidic residues) spans 60–77; the sequence is RPSEGNEPSTKELKEHPE. Over residues 95–106 the composition is skewed to low complexity; the sequence is TSSTQKKSSSSS. Helical transmembrane passes span 227-247, 268-288, 303-323, and 358-378; these read MIGL…IVVI, LAYP…ISAF, FLAL…LILS, and WIVV…FLSY.

It belongs to the TMEM237 family. As to quaternary structure, part of the tectonic-like complex (also named B9 complex). Interacts with TMEM107.

It localises to the membrane. Its subcellular location is the cell projection. It is found in the cilium. Functionally, component of the transition zone in primary cilia. Required for ciliogenesis. The sequence is that of Transmembrane protein 237 (TMEM237) from Homo sapiens (Human).